A 78-amino-acid chain; its full sequence is Large ribosomal subunit protein bL28 (78 aa).

Residues 1-23 form a disordered region; sequence MSRICQITGKKPLSGNKRSHSMN.

This sequence belongs to the bacterial ribosomal protein bL28 family.

This is Large ribosomal subunit protein bL28 from Wigglesworthia glossinidia brevipalpis.